The sequence spans 44 residues: Mu-conotoxin-like Cal 12.1.2f (44 aa).

4 cysteine pairs are disulfide-bonded: Cys3-Cys15, Cys10-Cys27, Cys17-Cys32, and Cys26-Cys38. At Trp16 the chain carries 6'-bromotryptophan. The residue at position 22 (Pro22) is a 4-hydroxyproline. A 6'-bromotryptophan mark is found at Trp36 and Trp37. Pro39 carries the 4-hydroxyproline modification. 6'-bromotryptophan is present on Trp43.

In terms of tissue distribution, expressed by the venom duct.

Its subcellular location is the secreted. Mu-conotoxins block voltage-gated sodium channels. This toxin reversibly blocks voltage-gated sodium channel in cephalopods, with no alteration in the voltage dependence of sodium conductance or on the kinetics of inactivation. The polypeptide is Mu-conotoxin-like Cal 12.1.2f (Californiconus californicus (California cone)).